The chain runs to 289 residues: Bifunctional protein FolD (289 aa).

Residues 166-168 and Ile-232 each bind NADP(+); that span reads GVS.

It belongs to the tetrahydrofolate dehydrogenase/cyclohydrolase family. Homodimer.

The catalysed reaction is (6R)-5,10-methylene-5,6,7,8-tetrahydrofolate + NADP(+) = (6R)-5,10-methenyltetrahydrofolate + NADPH. The enzyme catalyses (6R)-5,10-methenyltetrahydrofolate + H2O = (6R)-10-formyltetrahydrofolate + H(+). Its pathway is one-carbon metabolism; tetrahydrofolate interconversion. Catalyzes the oxidation of 5,10-methylenetetrahydrofolate to 5,10-methenyltetrahydrofolate and then the hydrolysis of 5,10-methenyltetrahydrofolate to 10-formyltetrahydrofolate. The sequence is that of Bifunctional protein FolD from Methylobacillus flagellatus (strain ATCC 51484 / DSM 6875 / VKM B-1610 / KT).